The following is a 375-amino-acid chain: Chaperone protein DnaJ (375 aa).

Residues 5-70 (DYYEVLGVNR…RKRASYDQFG (66 aa)) form the J domain. The segment at 133 to 211 (GLSRTIKVPT…CHGQGRQQQT (79 aa)) adopts a CR-type zinc-finger fold. 8 residues coordinate Zn(2+): C146, C149, C163, C166, C185, C188, C199, and C202. CXXCXGXG motif repeat units follow at residues 146 to 153 (CKTCNGSG), 163 to 170 (CPRCNGSG), 185 to 192 (CSVCRGRG), and 199 to 206 (CTDCHGQG).

It belongs to the DnaJ family. In terms of assembly, homodimer. The cofactor is Zn(2+).

Its subcellular location is the cytoplasm. Its function is as follows. Participates actively in the response to hyperosmotic and heat shock by preventing the aggregation of stress-denatured proteins and by disaggregating proteins, also in an autonomous, DnaK-independent fashion. Unfolded proteins bind initially to DnaJ; upon interaction with the DnaJ-bound protein, DnaK hydrolyzes its bound ATP, resulting in the formation of a stable complex. GrpE releases ADP from DnaK; ATP binding to DnaK triggers the release of the substrate protein, thus completing the reaction cycle. Several rounds of ATP-dependent interactions between DnaJ, DnaK and GrpE are required for fully efficient folding. Also involved, together with DnaK and GrpE, in the DNA replication of plasmids through activation of initiation proteins. This chain is Chaperone protein DnaJ, found in Coxiella burnetii (strain CbuK_Q154) (Coxiella burnetii (strain Q154)).